The chain runs to 274 residues: Glucosamine-6-phosphate deaminase (274 aa).

Asp71 (proton acceptor; for enolization step) is an active-site residue. Asp140 functions as the For ring-opening step in the catalytic mechanism. His142 acts as the Proton acceptor; for ring-opening step in catalysis. Glu147 (for ring-opening step) is an active-site residue.

It belongs to the glucosamine/galactosamine-6-phosphate isomerase family. NagB subfamily.

The enzyme catalyses alpha-D-glucosamine 6-phosphate + H2O = beta-D-fructose 6-phosphate + NH4(+). Its pathway is amino-sugar metabolism; N-acetylneuraminate degradation; D-fructose 6-phosphate from N-acetylneuraminate: step 5/5. Catalyzes the reversible isomerization-deamination of glucosamine 6-phosphate (GlcN6P) to form fructose 6-phosphate (Fru6P) and ammonium ion. This Fusobacterium nucleatum subsp. nucleatum (strain ATCC 25586 / DSM 15643 / BCRC 10681 / CIP 101130 / JCM 8532 / KCTC 2640 / LMG 13131 / VPI 4355) protein is Glucosamine-6-phosphate deaminase.